We begin with the raw amino-acid sequence, 291 residues long: Pantothenate synthetase (291 aa).

30–37 (MGYLHVGH) contacts ATP. The active-site Proton donor is the His37. Gln61 is a (R)-pantoate binding site. Gln61 lines the beta-alanine pocket. 147–150 (GEKD) is an ATP binding site. Gln153 is a binding site for (R)-pantoate. Residues Val176 and 184–187 (CSSR) contribute to the ATP site.

It belongs to the pantothenate synthetase family. Homodimer.

Its subcellular location is the cytoplasm. The enzyme catalyses (R)-pantoate + beta-alanine + ATP = (R)-pantothenate + AMP + diphosphate + H(+). Its pathway is cofactor biosynthesis; (R)-pantothenate biosynthesis; (R)-pantothenate from (R)-pantoate and beta-alanine: step 1/1. Catalyzes the condensation of pantoate with beta-alanine in an ATP-dependent reaction via a pantoyl-adenylate intermediate. The protein is Pantothenate synthetase of Sinorhizobium medicae (strain WSM419) (Ensifer medicae).